A 1228-amino-acid chain; its full sequence is Probable phospholipid-transporting ATPase 5 (1228 aa).

At 1–74 (MARGRIRSKL…TTRYNLITFF (74 aa)) the chain is on the cytoplasmic side. The chain crosses the membrane as a helical span at residues 75–96 (PKSLYEQFHRAANLYFLVAAIL). At 97 to 100 (SVFP) the chain is on the extracellular side. A helical membrane pass occupies residues 101 to 123 (LSPFNKWSMIAPLVFVVGLSMLK). Topologically, residues 124-305 (EALEDWRRFM…SRIERTMDYI (182 aa)) are cytoplasmic. A helical membrane pass occupies residues 306-327 (IYTLLVLLILISCISSSGFAWE). Topologically, residues 328–359 (TEFHMPKMWYLRPGEPIDFTNPINPIYAGVVH) are extracellular. A helical membrane pass occupies residues 360-377 (LITALLLYGYLIPISLYV). Residues 378–934 (SIEVVKVWQA…HGHWCYKRIA (557 aa)) are Cytoplasmic-facing. The active-site 4-aspartylphosphate intermediate is the D425. K616 is covalently cross-linked (Glycyl lysine isopeptide (Lys-Gly) (interchain with G-Cter in ubiquitin)). Mg(2+) contacts are provided by D879 and D883. The chain crosses the membrane as a helical span at residues 935 to 954 (QMICYFFYKNIAFGLTLFYF). The Extracellular portion of the chain corresponds to 955–968 (EAFTGFSGQSVYND). A helical transmembrane segment spans residues 969–988 (YYLLLFNVVLTSLPVIALGV). Residues 989–1018 (FEQDVSSEICLQFPALYQQGTKNLFFDWSR) lie on the Cytoplasmic side of the membrane. Residues 1019–1041 (ILGWMCNGVYASLVIFFLNIGII) traverse the membrane as a helical segment. At 1042–1054 (YSQAFRDNGQTAD) the chain is on the extracellular side. Residues 1055-1077 (MDAVGTTMFTCIIWAANVQIALT) form a helical membrane-spanning segment. Topologically, residues 1078–1083 (MSHFTW) are cytoplasmic. The chain crosses the membrane as a helical span at residues 1084–1104 (IQHVLIWGSIGMWYLFVAIYS). Over 1105-1117 (MMPPSYSGNIYRI) the chain is Extracellular. Residues 1118–1146 (LDEILAPAPIYWMATLLVTVAAVLPYVAH) traverse the membrane as a helical segment. Residues 1147–1228 (IAFQRFLNPL…AQDAMSPRSL (82 aa)) lie on the Cytoplasmic side of the membrane.

This sequence belongs to the cation transport ATPase (P-type) (TC 3.A.3) family. Type IV subfamily.

Its subcellular location is the membrane. It catalyses the reaction ATP + H2O + phospholipidSide 1 = ADP + phosphate + phospholipidSide 2.. Its function is as follows. Involved in transport of phospholipids. The chain is Probable phospholipid-transporting ATPase 5 from Arabidopsis thaliana (Mouse-ear cress).